A 746-amino-acid chain; its full sequence is Long-chain-alcohol oxidase FAO3 (746 aa).

The chain crosses the membrane as a helical span at residues 139-159; that stretch reads ILTPIRAAFVYIKVAFLFCFF. 233 to 248 contacts FAD; it reads CDVVVVGSGSGGGVAA. Histidine 677 acts as the Proton acceptor in catalysis.

This sequence belongs to the GMC oxidoreductase family.

It is found in the membrane. It catalyses the reaction a long-chain primary fatty alcohol + O2 = a long-chain fatty aldehyde + H2O2. Its function is as follows. Long-chain fatty alcohol oxidase involved in the omega-oxidation pathway of lipid degradation. The chain is Long-chain-alcohol oxidase FAO3 (FAO3) from Arabidopsis thaliana (Mouse-ear cress).